An 89-amino-acid polypeptide reads, in one-letter code: Large ribosomal subunit protein bL28 (89 aa).

This sequence belongs to the bacterial ribosomal protein bL28 family.

This chain is Large ribosomal subunit protein bL28, found in Chlamydia felis (strain Fe/C-56) (Chlamydophila felis).